A 234-amino-acid chain; its full sequence is Large ribosomal subunit protein uL1 (234 aa).

The protein belongs to the universal ribosomal protein uL1 family. In terms of assembly, part of the 50S ribosomal subunit.

Binds directly to 23S rRNA. The L1 stalk is quite mobile in the ribosome, and is involved in E site tRNA release. Functionally, protein L1 is also a translational repressor protein, it controls the translation of the L11 operon by binding to its mRNA. This Helicobacter pylori (strain G27) protein is Large ribosomal subunit protein uL1.